Here is a 353-residue protein sequence, read N- to C-terminus: Protein CYTOKININ-RESPONSIVE GATA TRANSCRIPTION FACTOR 1 (353 aa).

Positions isoleucine 137 to aspartate 144 match the Nuclear localization signal 1 motif. The disordered stretch occupies residues alanine 142–glutamine 166. The GATA-type zinc finger occupies cysteine 178–cysteine 203. A Nuclear localization signal 2 motif is present at residues glutamate 244–aspartate 251.

It belongs to the type IV zinc-finger family. Class B subfamily. In terms of tissue distribution, mostly expressed in leaves and stems, and, at low levels, in roots.

It is found in the nucleus. Functionally, transcriptional regulator that specifically binds 5'-GATA-3' or 5'-GAT-3' motifs within gene promoters. Influences the expression of nuclear encoded chloroplast-targeted genes. Regulates chloroplast development and promotes chlorophyll accumulation. Modulates plant architecture (e.g. height, length and width of leaf blades, and flowering tillers production) and represses tillering, probably by modulating number of cells. Promotes senescence. Involved in grain filling, panicle development and starch production. The chain is Protein CYTOKININ-RESPONSIVE GATA TRANSCRIPTION FACTOR 1 from Oryza sativa subsp. japonica (Rice).